The following is a 417-amino-acid chain: Peptidyl-Asp metalloendopeptidase (417 aa).

A signal peptide spans 1-25 (MLSRSIGKAAGGLVLGLSVAAAAHA). His327 is a Zn(2+) binding site. Glu328 is a catalytic residue. Positions 331 and 337 each coordinate Zn(2+).

This sequence belongs to the peptidase M72 family. Requires Zn(2+) as cofactor.

The enzyme catalyses Cleavage of Xaa-|-Asp, Xaa-|-Glu and Xaa-|-cysteic acid bonds.. In terms of biological role, metalloprotease, specifically cleaves on the N-terminal side of aspartyl, glutamyl and cysteic acid residues. In Stenotrophomonas maltophilia (strain K279a), this protein is Peptidyl-Asp metalloendopeptidase.